The chain runs to 254 residues: 3-deoxy-manno-octulosonate cytidylyltransferase (254 aa).

Belongs to the KdsB family.

It is found in the cytoplasm. It catalyses the reaction 3-deoxy-alpha-D-manno-oct-2-ulosonate + CTP = CMP-3-deoxy-beta-D-manno-octulosonate + diphosphate. The protein operates within nucleotide-sugar biosynthesis; CMP-3-deoxy-D-manno-octulosonate biosynthesis; CMP-3-deoxy-D-manno-octulosonate from 3-deoxy-D-manno-octulosonate and CTP: step 1/1. Its pathway is bacterial outer membrane biogenesis; lipopolysaccharide biosynthesis. In terms of biological role, activates KDO (a required 8-carbon sugar) for incorporation into bacterial lipopolysaccharide in Gram-negative bacteria. The chain is 3-deoxy-manno-octulosonate cytidylyltransferase from Pseudomonas aeruginosa (strain LESB58).